Reading from the N-terminus, the 302-residue chain is Stanniocalcin-2 (302 aa).

A signal peptide spans 1-24 (MCAERLGHFMTLALVLATIDPARG). A disordered region spans residues 23–44 (RGTDATNPPEGPQDRSSQQKGR). A glycan (N-linked (GlcNAc...) asparagine) is linked at Asn73. Residues 218 to 302 (PPTAPPERQP…EQSEYSDIRR (85 aa)) form a disordered region. Over residues 227-264 (PQVDRAKLSRAHHGEAGHHLPEPSSRETGRGAKGERGS) the composition is skewed to basic and acidic residues. 2 positions are modified to phosphoserine: Ser250 and Ser251. Thr254 is modified (phosphothreonine).

This sequence belongs to the stanniocalcin family. Homodimer; disulfide-linked.

Its subcellular location is the secreted. Functionally, has an anti-hypocalcemic action on calcium and phosphate homeostasis. This chain is Stanniocalcin-2 (STC2), found in Macaca nemestrina (Pig-tailed macaque).